A 434-amino-acid chain; its full sequence is Zinc finger CCCH domain-containing protein 10 (434 aa).

Residues 1–37 (MPDRDSYANGTGSSGGGPGGGGSEEASGAGVGSGGAS) form a disordered region. Positions 12-35 (GSSGGGPGGGGSEEASGAGVGSGG) are enriched in gly residues. C3H1-type zinc fingers lie at residues 36–63 (ASSD…HPDM), 73–99 (KNEF…HGSK), and 134–161 (KEEV…HLQR). Omega-N-methylarginine is present on residues Arg-185 and Arg-186. Positions 196-207 (PDRGFEDHEPGP) are enriched in basic and acidic residues. The tract at residues 196 to 217 (PDRGFEDHEPGPKRRRGGCCPP) is disordered. Residues 234 to 280 (GVECRLLEEENAMLRKRVEELKKQVSNLLATNEVLLEQNAQFRNQAK) are a coiled coil. The span at 314–330 (TTLSSQALQPRPVSQQE) shows a compositional bias: polar residues. Residues 314-362 (TTLSSQALQPRPVSQQELVAPAGAPAAPPTNAAPPAAPPPPPPHLTPEI) are disordered. Positions 339 to 358 (AAPPTNAAPPAAPPPPPPHL) are enriched in pro residues.

It is found in the nucleus. Functionally, specific regulator of miRNA biogenesis. Binds, via the C3H1-type zinc finger domains, to the binding motif 5'-GCAGCGC-3' on microRNA pri-MIR143 and negatively regulates the processing to mature microRNA. The protein is Zinc finger CCCH domain-containing protein 10 (ZC3H10) of Homo sapiens (Human).